A 101-amino-acid polypeptide reads, in one-letter code: Integration host factor subunit alpha (101 aa).

This sequence belongs to the bacterial histone-like protein family. As to quaternary structure, heterodimer of an alpha and a beta chain.

This protein is one of the two subunits of integration host factor, a specific DNA-binding protein that functions in genetic recombination as well as in transcriptional and translational control. In Dinoroseobacter shibae (strain DSM 16493 / NCIMB 14021 / DFL 12), this protein is Integration host factor subunit alpha.